We begin with the raw amino-acid sequence, 51 residues long: Micropeptide inhibiting actin cytoskeleton (51 aa).

The interval 1-22 (MERAGVPGFSPRRSSVEAKMQS) is disordered.

In terms of assembly, interacts with aquaporin AQP2.

Reduces filamentous actin fibers by interacting with aquaporin AQP2 which leads to inhibition of the expression of SEPTIN4 and integrin ITGB4. Also inhibits the activation of the EREG/EGFR signaling pathway through interaction with AQP2. This Homo sapiens (Human) protein is Micropeptide inhibiting actin cytoskeleton.